A 73-amino-acid chain; its full sequence is Capsid protein G8P (73 aa).

The signal sequence occupies residues 1-23; it reads MKKSLVLKASVAVATLVPMLSFA. Residues 24–44 lie on the Periplasmic side of the membrane; sequence AEGDDPAKAAFDSLQASATEY. The helical transmembrane segment at 45-65 threads the bilayer; it reads IGYAWAMVVVIVGATIGIKLF. At 66–73 the chain is on the cytoplasmic side; it reads KKFTSKAS.

This sequence belongs to the inovirus capsid protein family. As to quaternary structure, homomultimerizes. There are several thousands of this protein in the phage capsid.

It localises to the virion. The protein localises to the host membrane. In terms of biological role, self assembles to form a helical capsid wrapping up the viral genomic DNA. The capsid displays a filamentous structure with a length of 760-1950 nm and a width of 6-8 nm. The virion assembly and budding take place at the host inner membrane. The sequence is that of Capsid protein G8P (VIII) from Escherichia coli (Bacteriophage f1).